The primary structure comprises 384 residues: MAPRLPARCWRQLSLVERSATHTTTTAAASSLLLAGRTTPTFSASSPSTVFPSLLPQITKRGVKYGWSTLPKRSRPTRFNQVTQGLPAPTSGPAAALKRREKTTPLRTGVLAVKKGMTVFMGRTGARIPCTVLQLDRVQVVANKTRAKNGYWAVQVGLGERRAENVGAPQLGYYEAKGIPPKQTLAEFKVRNQDGLLPVGVQLFPDWFHVGQVVDVRGITRGMGFAGGMKRHGFAGQEASHGNSLNHRTIGSVGGSQGSGSRVLPGKKMPGRMGAQQHTVQNLPILMVDNELGIVVVKGAVAGHKGAVVKVQDAVKKAPPPEEFVEATKQLLNERFPDAEEKLQAARKLHLELKEARRQGLIDSLIKNGLTEKADGNAAVEASA.

2 disordered regions span residues 80 to 101 (NQVT…KRRE) and 237 to 262 (QEAS…SGSR). The segment covering 240–249 (SHGNSLNHRT) has biased composition (polar residues).

Belongs to the universal ribosomal protein uL3 family. In terms of assembly, component of the mitochondrial large ribosomal subunit (mt-LSU). Mature N.crassa 74S mitochondrial ribosomes consist of a small (37S) and a large (54S) subunit. The 37S small subunit contains a 16S ribosomal RNA (16S mt-rRNA) and 32 different proteins. The 54S large subunit contains a 23S rRNA (23S mt-rRNA) and 42 different proteins.

The protein resides in the mitochondrion. Its function is as follows. Component of the mitochondrial ribosome (mitoribosome), a dedicated translation machinery responsible for the synthesis of mitochondrial genome-encoded proteins, including at least some of the essential transmembrane subunits of the mitochondrial respiratory chain. The mitoribosomes are attached to the mitochondrial inner membrane and translation products are cotranslationally integrated into the membrane. The protein is Large ribosomal subunit protein uL3m (mrpl9) of Neurospora crassa (strain ATCC 24698 / 74-OR23-1A / CBS 708.71 / DSM 1257 / FGSC 987).